Reading from the N-terminus, the 489-residue chain is Amino acid transporter AVT6E (489 aa).

A run of 11 helical transmembrane segments spans residues 76–96 (GIYGAVFNLTTSIIGAGIMAL), 102–122 (VLGLVLGFVLIILMALLSEIS), 156–176 (ICIIVNNGGVLVVYLIIMGDV), 201–221 (VLILIVMVIFLAPLCALNKID), 227–247 (SAASVALAVVFVVVCFVVATI), 269–289 (ILDLLVVIPIMSNAYVCHFNV), 310–330 (ITTAICVVVYASTAVSGYLLF), 357–377 (IVRIGYILHLVLVFPVIHFSL), 404–424 (VVLLALIYIGSTMIPNIWTAF), 425–445 (KFTGATSAVSLGFTFPALIAL), and 461–481 (VSWLMLILAVVVSIVGTIGNI).

Belongs to the amino acid/polyamine transporter 2 family. Amino acid/auxin permease (AAAP) (TC 2.A.18.6) subfamily.

Its subcellular location is the endoplasmic reticulum membrane. The protein resides in the vacuole membrane. This is Amino acid transporter AVT6E from Arabidopsis thaliana (Mouse-ear cress).